A 312-amino-acid polypeptide reads, in one-letter code: Ribosomal RNA small subunit methyltransferase H (312 aa).

Residues G38–H40, D58, F84, D104, and Q111 contribute to the S-adenosyl-L-methionine site.

Belongs to the methyltransferase superfamily. RsmH family.

The protein localises to the cytoplasm. It catalyses the reaction cytidine(1402) in 16S rRNA + S-adenosyl-L-methionine = N(4)-methylcytidine(1402) in 16S rRNA + S-adenosyl-L-homocysteine + H(+). Functionally, specifically methylates the N4 position of cytidine in position 1402 (C1402) of 16S rRNA. This chain is Ribosomal RNA small subunit methyltransferase H, found in Alcanivorax borkumensis (strain ATCC 700651 / DSM 11573 / NCIMB 13689 / SK2).